Consider the following 258-residue polypeptide: DNA-directed RNA polymerase subunit Rpo3 (258 aa).

The protein belongs to the archaeal Rpo3/eukaryotic RPB3 RNA polymerase subunit family. As to quaternary structure, part of the RNA polymerase complex.

It is found in the cytoplasm. It carries out the reaction RNA(n) + a ribonucleoside 5'-triphosphate = RNA(n+1) + diphosphate. Its function is as follows. DNA-dependent RNA polymerase (RNAP) catalyzes the transcription of DNA into RNA using the four ribonucleoside triphosphates as substrates. This is DNA-directed RNA polymerase subunit Rpo3 from Pyrobaculum calidifontis (strain DSM 21063 / JCM 11548 / VA1).